A 267-amino-acid polypeptide reads, in one-letter code: UPF0173 metal-dependent hydrolase THEYE_A0282 (267 aa).

The protein belongs to the UPF0173 family.

The sequence is that of UPF0173 metal-dependent hydrolase THEYE_A0282 from Thermodesulfovibrio yellowstonii (strain ATCC 51303 / DSM 11347 / YP87).